We begin with the raw amino-acid sequence, 227 residues long: Pyridoxine-5'-phosphate oxidase (227 aa).

Residue arginine 20–tyrosine 23 coordinates pyridoxal 5'-phosphate. Residue arginine 75 to leucine 78 coordinates FMN. Lysine 80 contacts pyridoxal 5'-phosphate. Residues tyrosine 90–threonine 91, arginine 96–lysine 97, and glutamine 117 contribute to the FMN site. Residues tyrosine 135, arginine 139, and serine 143 each contribute to the pyridoxal 5'-phosphate site. Residues phenylalanine 152–glutamine 153 and tryptophan 197 each bind FMN. Arginine 203–histidine 205 serves as a coordination point for pyridoxal 5'-phosphate. Arginine 207 contacts FMN.

This sequence belongs to the pyridoxamine 5'-phosphate oxidase family. Homodimer. Requires FMN as cofactor.

It catalyses the reaction pyridoxamine 5'-phosphate + O2 + H2O = pyridoxal 5'-phosphate + H2O2 + NH4(+). It carries out the reaction pyridoxine 5'-phosphate + O2 = pyridoxal 5'-phosphate + H2O2. It functions in the pathway cofactor metabolism; pyridoxal 5'-phosphate salvage; pyridoxal 5'-phosphate from pyridoxamine 5'-phosphate: step 1/1. It participates in cofactor metabolism; pyridoxal 5'-phosphate salvage; pyridoxal 5'-phosphate from pyridoxine 5'-phosphate: step 1/1. Its function is as follows. Catalyzes the oxidation of either pyridoxine 5'-phosphate (PNP) or pyridoxamine 5'-phosphate (PMP) into pyridoxal 5'-phosphate (PLP). In Dictyostelium discoideum (Social amoeba), this protein is Pyridoxine-5'-phosphate oxidase (pnpo).